The primary structure comprises 124 residues: Large ribosomal subunit protein bL17 (124 aa).

It belongs to the bacterial ribosomal protein bL17 family. Part of the 50S ribosomal subunit. Contacts protein L32.

The protein is Large ribosomal subunit protein bL17 of Mycoplasma pneumoniae (strain ATCC 29342 / M129 / Subtype 1) (Mycoplasmoides pneumoniae).